A 359-amino-acid chain; its full sequence is tRNA N6-adenosine threonylcarbamoyltransferase (359 aa).

The Fe cation site is built by His-115 and His-119. Substrate contacts are provided by residues 137–141 (LVSGG), Asp-170, Gly-183, and Asn-283. Asp-311 contributes to the Fe cation binding site. Residues 328-359 (APDSLDIAPRSRWPLDEKSAPVFGTGRRGAKA) are disordered.

It belongs to the KAE1 / TsaD family. It depends on Fe(2+) as a cofactor.

It localises to the cytoplasm. It carries out the reaction L-threonylcarbamoyladenylate + adenosine(37) in tRNA = N(6)-L-threonylcarbamoyladenosine(37) in tRNA + AMP + H(+). Its function is as follows. Required for the formation of a threonylcarbamoyl group on adenosine at position 37 (t(6)A37) in tRNAs that read codons beginning with adenine. Is involved in the transfer of the threonylcarbamoyl moiety of threonylcarbamoyl-AMP (TC-AMP) to the N6 group of A37, together with TsaE and TsaB. TsaD likely plays a direct catalytic role in this reaction. The chain is tRNA N6-adenosine threonylcarbamoyltransferase from Brucella ovis (strain ATCC 25840 / 63/290 / NCTC 10512).